A 448-amino-acid polypeptide reads, in one-letter code: Glucose-6-phosphate isomerase (448 aa).

Glu-290 (proton donor) is an active-site residue. Residues His-311 and Lys-425 contribute to the active site.

Belongs to the GPI family.

It is found in the cytoplasm. It catalyses the reaction alpha-D-glucose 6-phosphate = beta-D-fructose 6-phosphate. It functions in the pathway carbohydrate biosynthesis; gluconeogenesis. It participates in carbohydrate degradation; glycolysis; D-glyceraldehyde 3-phosphate and glycerone phosphate from D-glucose: step 2/4. In terms of biological role, catalyzes the reversible isomerization of glucose-6-phosphate to fructose-6-phosphate. This Oceanobacillus iheyensis (strain DSM 14371 / CIP 107618 / JCM 11309 / KCTC 3954 / HTE831) protein is Glucose-6-phosphate isomerase.